We begin with the raw amino-acid sequence, 375 residues long: MEDNITSIVIDCGSGMCKAGIGGEEFPRVSFPSIVGKPRFEKTMCAIGNKEYYVGDEAQSQRGMLSLKYPIKNGIVVNWEYMEKLLFHMFYNELRVSPDQYPILFTESPLNPKSNREMLTQIMFEKFNVPALYIAIQAVLSLYASGRTCGIVLDSGDDVTHTVPIYGGYVLQHSIIRLNFAGSDLTEYMAKLLLERGYSFTTTSEMEIVKSIKEKLAYVAINFNAEMSKPIDTLETTYQLPDGQIIIIGNERFRCAEALFQPSMIGLECDGIHETIFKSIMMCDIDIRKHMYANILLSGGNTMLSGISDRIYNQLRELAPNNMKILIVASPERKNLVWIGGSILTTLPLFQEMWISKEEYDEHGPSIINKKVGLY.

It belongs to the actin family.

It localises to the cytoplasm. The protein resides in the cytoskeleton. It catalyses the reaction ATP + H2O = ADP + phosphate + H(+). Actins are highly conserved proteins that are involved in various types of cell motility and are ubiquitously expressed in all eukaryotic cells. Multiple isoforms are involved in various cellular functions such as cytoskeleton structure, cell mobility, chromosome movement and muscle contraction. The sequence is that of Putative actin-26 (act26) from Dictyostelium discoideum (Social amoeba).